Consider the following 442-residue polypeptide: Putative nucleotide-sugar transporter YMD8 (442 aa).

The Cytoplasmic portion of the chain corresponds to 1–3 (MNR). Residues 4–24 (TVFLAFVFGWYFCSIALSIYN) traverse the membrane as a helical segment. Over 25 to 32 (RWMFDPKD) the chain is Extracellular. The helical transmembrane segment at 33-53 (GLGIGYPVLVTTFHQATLWLL) threads the bilayer. At 54–76 (SGIYIKLRHKPVKNVLRKNNGFN) the chain is on the cytoplasmic side. Residues 77-97 (WSFFLKFLLPTAVASAGDIGL) form a helical membrane-spanning segment. At 98-107 (SNVSFQYVPL) the chain is on the extracellular side. Asn99 carries N-linked (GlcNAc...) asparagine glycosylation. The helical transmembrane segment at 108-128 (TIYTIIKSSSIAFVLLFGCIF) threads the bilayer. The Cytoplasmic segment spans residues 129–132 (KLEK). A helical transmembrane segment spans residues 133-153 (FHWKLALSVIIMFVGVALMVF). Residues 154–166 (KPSDSTSTKNDQA) lie on the Extracellular side of the membrane. A helical membrane pass occupies residues 167-187 (LVIFGSFLVLASSCLSGLRWV). Over 188-254 (YTQLMLRNNP…PIHTIHQLAP (67 aa)) the chain is Cytoplasmic. Ser209 is subject to Phosphoserine. The helical transmembrane segment at 255-275 (IMGITLLLTSLLVEKPFPGIF) threads the bilayer. The Extracellular portion of the chain corresponds to 276–301 (SSSIFRLDTSNGGVGTETTVLSIVRG). The chain crosses the membrane as a helical span at residues 302–322 (IVLLILPGFAVFLLTICEFSI). Residues 323–329 (LEQTPVL) lie on the Cytoplasmic side of the membrane. The helical transmembrane segment at 330–350 (TVSIVGIVKELLTVIFGIIIL) threads the bilayer. The Extracellular segment spans residues 351–355 (SERLS). The chain crosses the membrane as a helical span at residues 356–376 (GFYNWLGMLIIMADVCYYNYF). The Cytoplasmic segment spans residues 377-442 (RYKQDLLQKY…QNVSRSSQQV (66 aa)).

It belongs to the TPT transporter family. SLC35C subfamily.

Its subcellular location is the golgi apparatus membrane. It localises to the cytoplasmic vesicle. It is found in the COPI-coated vesicle membrane. This is Putative nucleotide-sugar transporter YMD8 (YMD8) from Saccharomyces cerevisiae (strain ATCC 204508 / S288c) (Baker's yeast).